A 102-amino-acid polypeptide reads, in one-letter code: NADH-quinone oxidoreductase subunit K (102 aa).

3 helical membrane-spanning segments follow: residues 5 to 25 (ITHY…GIFL), 31 to 51 (IIIL…FVAF), and 66 to 86 (FVLT…VVFF).

Belongs to the complex I subunit 4L family. In terms of assembly, NDH-1 is composed of 14 different subunits. Subunits NuoA, H, J, K, L, M, N constitute the membrane sector of the complex.

The protein localises to the cell inner membrane. The catalysed reaction is a quinone + NADH + 5 H(+)(in) = a quinol + NAD(+) + 4 H(+)(out). NDH-1 shuttles electrons from NADH, via FMN and iron-sulfur (Fe-S) centers, to quinones in the respiratory chain. The immediate electron acceptor for the enzyme in this species is believed to be ubiquinone. Couples the redox reaction to proton translocation (for every two electrons transferred, four hydrogen ions are translocated across the cytoplasmic membrane), and thus conserves the redox energy in a proton gradient. The protein is NADH-quinone oxidoreductase subunit K of Bartonella tribocorum (strain CIP 105476 / IBS 506).